A 577-amino-acid chain; its full sequence is Arginine--tRNA ligase (577 aa).

The 'HIGH' region motif lies at 122-132 (PNVAKEMHVGH).

The protein belongs to the class-I aminoacyl-tRNA synthetase family. As to quaternary structure, monomer.

It is found in the cytoplasm. The catalysed reaction is tRNA(Arg) + L-arginine + ATP = L-arginyl-tRNA(Arg) + AMP + diphosphate. This Histophilus somni (strain 129Pt) (Haemophilus somnus) protein is Arginine--tRNA ligase.